Reading from the N-terminus, the 341-residue chain is GDP-fucose transporter 1 (341 aa).

10 helical membrane-spanning segments follow: residues 17-37, 41-61, 71-91, 103-123, 132-152, 156-176, 187-207, 231-251, 260-280, and 283-303; these read LVIGYALCSSLLAVINKLAIT, YPGLLTALQYLTCTVAVYLLG, FTWDTAKKFLPAAIVFYLAIF, DTFIVFRSLTPLLVAIADTVF, LTFLSLVVILAGAVGYVATDS, LTAYSWALAYLVTITTEMVYI, IWGLVLYNNLLSLMIAPVFWF, AFSSVAASCVFGFLISYFGFA, AFTVTGVVNKFLTVVINVLIW, and HATPVGLVCLLFTICGGVGYQ. Residues 316-341 are disordered; the sequence is SEKDSEKGEEDEELTQLVPGKLASVV.

This sequence belongs to the nucleotide-sugar transporter family. GDP-Mannose:GMP antiporter (GMA) (TC 2.A.7.13) subfamily. In terms of tissue distribution, ubiquitous.

The protein localises to the golgi apparatus membrane. Its function is as follows. Acts as the major nucleotide-sugar transporter for the import of GDP-Fucose into the Golgi lumen. Transports GDP-Fucose in a strict counter-exchange mode. Is required for proper plant growth and development. Also acts as a GDP-mannose transporter that may be involved in the import of GDP-mannose from the cytoplasm into the Golgi lumen. The protein is GDP-fucose transporter 1 of Arabidopsis thaliana (Mouse-ear cress).